Consider the following 481-residue polypeptide: ATP synthase subunit beta (481 aa).

154-161 is a binding site for ATP; the sequence is GGAGVGKT.

Belongs to the ATPase alpha/beta chains family. As to quaternary structure, F-type ATPases have 2 components, CF(1) - the catalytic core - and CF(0) - the membrane proton channel. CF(1) has five subunits: alpha(3), beta(3), gamma(1), delta(1), epsilon(1). CF(0) has three main subunits: a(1), b(2) and c(9-12). The alpha and beta chains form an alternating ring which encloses part of the gamma chain. CF(1) is attached to CF(0) by a central stalk formed by the gamma and epsilon chains, while a peripheral stalk is formed by the delta and b chains.

The protein resides in the cell inner membrane. It carries out the reaction ATP + H2O + 4 H(+)(in) = ADP + phosphate + 5 H(+)(out). Functionally, produces ATP from ADP in the presence of a proton gradient across the membrane. The catalytic sites are hosted primarily by the beta subunits. The protein is ATP synthase subunit beta of Novosphingobium aromaticivorans (strain ATCC 700278 / DSM 12444 / CCUG 56034 / CIP 105152 / NBRC 16084 / F199).